We begin with the raw amino-acid sequence, 638 residues long: Threonine--tRNA ligase (638 aa).

Positions 1–62 constitute a TGS domain; the sequence is MYQLTLPDKS…EKNSNIEVLT (62 aa). Residues 246-537 are catalytic; it reads DHRKIGKEMD…LIEHYEGKFP (292 aa). Residues Cys337, His388, and His514 each coordinate Zn(2+).

Belongs to the class-II aminoacyl-tRNA synthetase family. In terms of assembly, homodimer. It depends on Zn(2+) as a cofactor.

Its subcellular location is the cytoplasm. The catalysed reaction is tRNA(Thr) + L-threonine + ATP = L-threonyl-tRNA(Thr) + AMP + diphosphate + H(+). Catalyzes the attachment of threonine to tRNA(Thr) in a two-step reaction: L-threonine is first activated by ATP to form Thr-AMP and then transferred to the acceptor end of tRNA(Thr). Also edits incorrectly charged L-seryl-tRNA(Thr). This is Threonine--tRNA ligase from Leptospira interrogans serogroup Icterohaemorrhagiae serovar copenhageni (strain Fiocruz L1-130).